Reading from the N-terminus, the 427-residue chain is Glutamate-1-semialdehyde 2,1-aminomutase (427 aa).

At lysine 265 the chain carries N6-(pyridoxal phosphate)lysine.

The protein belongs to the class-III pyridoxal-phosphate-dependent aminotransferase family. HemL subfamily. In terms of assembly, homodimer. The cofactor is pyridoxal 5'-phosphate.

It localises to the cytoplasm. It catalyses the reaction (S)-4-amino-5-oxopentanoate = 5-aminolevulinate. It functions in the pathway porphyrin-containing compound metabolism; protoporphyrin-IX biosynthesis; 5-aminolevulinate from L-glutamyl-tRNA(Glu): step 2/2. The protein is Glutamate-1-semialdehyde 2,1-aminomutase of Pseudomonas putida (strain ATCC 700007 / DSM 6899 / JCM 31910 / BCRC 17059 / LMG 24140 / F1).